The primary structure comprises 345 residues: Protein RecA (345 aa).

Residue 66-73 participates in ATP binding; it reads GPESSGKT.

Belongs to the RecA family.

The protein resides in the cytoplasm. Its function is as follows. Can catalyze the hydrolysis of ATP in the presence of single-stranded DNA, the ATP-dependent uptake of single-stranded DNA by duplex DNA, and the ATP-dependent hybridization of homologous single-stranded DNAs. It interacts with LexA causing its activation and leading to its autocatalytic cleavage. This chain is Protein RecA, found in Frankia casuarinae (strain DSM 45818 / CECT 9043 / HFP020203 / CcI3).